The following is a 136-amino-acid chain: Large ribosomal subunit protein uL16c (136 aa).

Over residues 1-17 (MLSPKRVKFRKQHRGRM) the composition is skewed to basic residues. Residues 1–25 (MLSPKRVKFRKQHRGRMKGISTRGN) are disordered.

It belongs to the universal ribosomal protein uL16 family. Part of the 50S ribosomal subunit.

Its subcellular location is the plastid. The protein localises to the chloroplast. This is Large ribosomal subunit protein uL16c from Anthoceros angustus (Hornwort).